The chain runs to 130 residues: Small ribosomal subunit protein uS9 (130 aa).

It belongs to the universal ribosomal protein uS9 family.

In Methylibium petroleiphilum (strain ATCC BAA-1232 / LMG 22953 / PM1), this protein is Small ribosomal subunit protein uS9.